The primary structure comprises 461 residues: Putative cytochrome P450 132 (461 aa).

C409 contacts heme.

It belongs to the cytochrome P450 family. The cofactor is heme.

The chain is Putative cytochrome P450 132 (cyp132) from Mycobacterium bovis (strain ATCC BAA-935 / AF2122/97).